Consider the following 170-residue polypeptide: MTAVPKKISPQDGFFWKTKTLEEMSQAEWESLCDGCARCCLEKLEDEDSGRIYFTHVGCRLLDGDACACHDYANRSERVPDCVRLTPENVRTLSWLPPSCGYRLVAEGRDLYWWHPLISGDPNTVHDAGVSVRGRVEATETEVSVEDLEDHIVSWPALLPRRAKLKKRPG.

It belongs to the UPF0260 family.

In Rhodopseudomonas palustris (strain HaA2), this protein is UPF0260 protein RPB_3505.